A 453-amino-acid chain; its full sequence is Bifunctional protein GlmU (453 aa).

The interval Met1–Arg226 is pyrophosphorylase. UDP-N-acetyl-alpha-D-glucosamine contacts are provided by residues Leu7–Gly10, Lys21, Gln73, and Gly78–Thr79. Asp103 lines the Mg(2+) pocket. Gly140, Glu155, Asn170, and Asn224 together coordinate UDP-N-acetyl-alpha-D-glucosamine. Residue Asn224 participates in Mg(2+) binding. A linker region spans residues Lys227–Gln247. The tract at residues Gly248 to Lys453 is N-acetyltransferase. Residues Arg329 and Lys347 each contribute to the UDP-N-acetyl-alpha-D-glucosamine site. His359 serves as the catalytic Proton acceptor. UDP-N-acetyl-alpha-D-glucosamine-binding residues include Tyr362 and Asn373. Residues Ala376, Asn382–Tyr383, Ala419, and Arg436 each bind acetyl-CoA.

In the N-terminal section; belongs to the N-acetylglucosamine-1-phosphate uridyltransferase family. This sequence in the C-terminal section; belongs to the transferase hexapeptide repeat family. In terms of assembly, homotrimer. The cofactor is Mg(2+).

It is found in the cytoplasm. The enzyme catalyses alpha-D-glucosamine 1-phosphate + acetyl-CoA = N-acetyl-alpha-D-glucosamine 1-phosphate + CoA + H(+). It carries out the reaction N-acetyl-alpha-D-glucosamine 1-phosphate + UTP + H(+) = UDP-N-acetyl-alpha-D-glucosamine + diphosphate. The protein operates within nucleotide-sugar biosynthesis; UDP-N-acetyl-alpha-D-glucosamine biosynthesis; N-acetyl-alpha-D-glucosamine 1-phosphate from alpha-D-glucosamine 6-phosphate (route II): step 2/2. Its pathway is nucleotide-sugar biosynthesis; UDP-N-acetyl-alpha-D-glucosamine biosynthesis; UDP-N-acetyl-alpha-D-glucosamine from N-acetyl-alpha-D-glucosamine 1-phosphate: step 1/1. It participates in bacterial outer membrane biogenesis; LPS lipid A biosynthesis. Catalyzes the last two sequential reactions in the de novo biosynthetic pathway for UDP-N-acetylglucosamine (UDP-GlcNAc). The C-terminal domain catalyzes the transfer of acetyl group from acetyl coenzyme A to glucosamine-1-phosphate (GlcN-1-P) to produce N-acetylglucosamine-1-phosphate (GlcNAc-1-P), which is converted into UDP-GlcNAc by the transfer of uridine 5-monophosphate (from uridine 5-triphosphate), a reaction catalyzed by the N-terminal domain. The sequence is that of Bifunctional protein GlmU from Rippkaea orientalis (strain PCC 8801 / RF-1) (Cyanothece sp. (strain PCC 8801)).